A 583-amino-acid chain; its full sequence is SHC-transforming protein 1 (583 aa).

N-acetylmethionine is present on Met1. Disordered stretches follow at residues Met1–Glu92 and Lys113–His137. Positions Glu16–Pro44 are enriched in low complexity. Ser36 carries the post-translational modification Phosphoserine. Phosphoserine is present on Ser139. Position 154 is an N6-acetyllysine (Lys154). The region spanning Met156–Glu339 is the PID domain. A CH1 region spans residues Glu340 to Pro487. A phosphotyrosine mark is found at Tyr349 and Tyr350. Positions Ala372–Cys416 are disordered. A Phosphotyrosine modification is found at Tyr427. Ser453 bears the Phosphoserine mark. The SH2 domain maps to Trp488–Val579.

In terms of assembly, interacts with CPNE3; this interaction may mediate the binding of CPNE3 with ERBB2. Interacts with the Trk receptors NTRK1, NTRK2 and NTRK3; in a phosphotyrosine-dependent manner. Interacts with the NPXY motif of tyrosine-phosphorylated IGF1R and INSR in vitro via the PID domain. Once activated, binds to GRB2. Interacts with tyrosine-phosphorylated CD3T and DDR2. Interacts with the N-terminal region of APS. Interacts with phosphorylated LRP1 and IRS4. Interacts with INPP5D/SHIP1 and INPPL1/SHIP2. Interacts with ALK, GAB2, GRB7 and KIT. Interacts with PTPN6/SHP (tyrosine phosphorylated). Identified in a complex containing FGFR4, NCAM1, CDH2, PLCG1, FRS2, SRC, SHC1, GAP43 and CTTN. Interacts with FLT4 (tyrosine-phosphorylated). Interacts with EPHB1 and GRB2; activates the MAPK/ERK cascade to regulate cell migration. Interacts with PDGFRB (tyrosine-phosphorylated). Interacts with ERBB4. Interacts with TEK/TIE2 (tyrosine-phosphorylated). Interacts with PTK2/FAK1. Interacts with CEACAM1; this interaction is CEACAM1-phosphorylation-dependent and mediates interaction with EGFR or INSR resulting in decrease coupling of SHC1 to the MAPK3/ERK1-MAPK1/ERK2 pathway. Interacts (via PID domain) with PEAK1 (when phosphorylated). Found in a complex with PPP1CA, PPP1CC, SHC1 and PEAK1. In terms of processing, phosphorylated by activated epidermal growth factor receptor. Phosphorylated in response to KIT signaling. Tyrosine phosphorylated in response to FLT3 and FLT4 signaling and by ligand-activated ALK. Tyrosine phosphorylated by ligand-activated PDGFRB. Tyrosine phosphorylated by TEK/TIE2. May be tyrosine phosphorylated by activated PTK2/FAK1. Tyrosine phosphorylated by activated PTK2B/PYK2. Dephosphorylation by PTPN2 may regulate interaction with GRB2.

Its subcellular location is the cytoplasm. The protein localises to the cell junction. The protein resides in the focal adhesion. In terms of biological role, signaling adapter that couples activated growth factor receptors to signaling pathways. Participates in a signaling cascade initiated by activated KIT and KITLG/SCF. Participates in signaling downstream of the angiopoietin receptor TEK/TIE2, and plays a role in the regulation of endothelial cell migration and sprouting angiogenesis. In Pongo abelii (Sumatran orangutan), this protein is SHC-transforming protein 1 (SHC1).